The following is a 350-amino-acid chain: MVTPCPTSPSSPAARAGRRDNDQNLRAPVKKSRRPRLRRKQPLHPLNPCPLPGDSGICDLFESPSSGSDGAESPSAARGGSPLPGPAQPVAQLDLQTFRDYGQSCYAFRKAQESHFHPREALARQPQVTAESRCKLLSWLIPVHRQFGLSFESLCLTVNTLDRFLTTTPVAADCFQLLGVTSLLIACKQVEVHPPRVKQLLALCCGAFSRQQLCNLECIVLHKLHFTLGAPTISFFLEHFTHARVEAGQAEASEALEAQALARGVAELSLADYAFTSYSPSLLAICCLALADRMLRVSRPVDLRLGDHPEAALEDCMGKLQLLVAINSTSLTHMLPVQICEKCSLPPSSK.

The interval 1–89 is disordered; the sequence is MVTPCPTSPS…GSPLPGPAQP (89 aa). Basic residues predominate over residues 28 to 42; the sequence is PVKKSRRPRLRRKQP. A Phosphoserine modification is found at S81.

The protein belongs to the cyclin family. As to expression, present in respiratory cells (at protein level).

It localises to the cytoplasm. The protein resides in the nucleus. Its subcellular location is the nucleolus. Its function is as follows. Specifically required for generation of multiciliated cells, possibly by promoting a cell cycle state compatible with centriole amplification and maturation. Acts downstream of MCIDAS to promote mother centriole amplification and maturation in preparation for apical docking. The sequence is that of Cyclin-O from Homo sapiens (Human).